The following is an 84-amino-acid chain: uncharacterized protein (84 aa).

A cysteine motif region spans residues C8–C47.

This is an uncharacterized protein from Rhizobium meliloti (strain 1021) (Ensifer meliloti).